We begin with the raw amino-acid sequence, 106 residues long: Pyrimidine/purine nucleoside phosphorylase (106 aa).

Belongs to the nucleoside phosphorylase PpnP family.

The catalysed reaction is a purine D-ribonucleoside + phosphate = a purine nucleobase + alpha-D-ribose 1-phosphate. It carries out the reaction adenosine + phosphate = alpha-D-ribose 1-phosphate + adenine. It catalyses the reaction cytidine + phosphate = cytosine + alpha-D-ribose 1-phosphate. The enzyme catalyses guanosine + phosphate = alpha-D-ribose 1-phosphate + guanine. The catalysed reaction is inosine + phosphate = alpha-D-ribose 1-phosphate + hypoxanthine. It carries out the reaction thymidine + phosphate = 2-deoxy-alpha-D-ribose 1-phosphate + thymine. It catalyses the reaction uridine + phosphate = alpha-D-ribose 1-phosphate + uracil. The enzyme catalyses xanthosine + phosphate = alpha-D-ribose 1-phosphate + xanthine. Functionally, catalyzes the phosphorolysis of diverse nucleosides, yielding D-ribose 1-phosphate and the respective free bases. Can use uridine, adenosine, guanosine, cytidine, thymidine, inosine and xanthosine as substrates. Also catalyzes the reverse reactions. This Burkholderia cenocepacia (strain ATCC BAA-245 / DSM 16553 / LMG 16656 / NCTC 13227 / J2315 / CF5610) (Burkholderia cepacia (strain J2315)) protein is Pyrimidine/purine nucleoside phosphorylase.